The primary structure comprises 122 residues: Large ribosomal subunit protein uL14 (122 aa).

Belongs to the universal ribosomal protein uL14 family. As to quaternary structure, part of the 50S ribosomal subunit. Forms a cluster with proteins L3 and L19. In the 70S ribosome, L14 and L19 interact and together make contacts with the 16S rRNA in bridges B5 and B8.

Binds to 23S rRNA. Forms part of two intersubunit bridges in the 70S ribosome. The sequence is that of Large ribosomal subunit protein uL14 from Desulforudis audaxviator (strain MP104C).